The chain runs to 230 residues: RNA polymerase sigma factor FliA (230 aa).

The interval 6 to 78 (LWQRYVPLVR…MLDELRSRDW (73 aa)) is sigma-70 factor domain-2. Positions 33 to 36 (DLLQ) match the Interaction with polymerase core subunit RpoC motif. Positions 86-156 (NAREVASAMQ…VEPMLEGHED (71 aa)) are sigma-70 factor domain-3. Positions 175–223 (AIEALPEREKMVLTLYYQEELNLKEIGAVLEVGESRVSQLHSQAIKRLR) are sigma-70 factor domain-4. The segment at residues 197-216 (LKEIGAVLEVGESRVSQLHS) is a DNA-binding region (H-T-H motif).

This sequence belongs to the sigma-70 factor family. FliA subfamily.

It localises to the cytoplasm. Functionally, sigma factors are initiation factors that promote the attachment of RNA polymerase to specific initiation sites and are then released. This sigma factor controls the expression of flagella-related genes. This Yersinia enterocolitica protein is RNA polymerase sigma factor FliA.